Here is a 145-residue protein sequence, read N- to C-terminus: S-adenosylmethionine synthase 2 (145 aa).

Residues 6 to 7 (RK), alanine 23, lysine 27, and lysine 31 contribute to the ATP site. Lysine 31 is a binding site for L-methionine.

Belongs to the AdoMet synthase family. In terms of assembly, homotetramer. Requires Mn(2+) as cofactor. Mg(2+) serves as cofactor. Co(2+) is required as a cofactor. The cofactor is K(+). Mainly in floral buds and roots.

It localises to the cytoplasm. It catalyses the reaction L-methionine + ATP + H2O = S-adenosyl-L-methionine + phosphate + diphosphate. It participates in amino-acid biosynthesis; S-adenosyl-L-methionine biosynthesis; S-adenosyl-L-methionine from L-methionine: step 1/1. Functionally, catalyzes the formation of S-adenosylmethionine from methionine and ATP. The reaction comprises two steps that are both catalyzed by the same enzyme: formation of S-adenosylmethionine (AdoMet) and triphosphate, and subsequent hydrolysis of the triphosphate. This Petroselinum crispum (Parsley) protein is S-adenosylmethionine synthase 2 (SMS-2).